The primary structure comprises 153 residues: 6,7-dimethyl-8-ribityllumazine synthase (153 aa).

5-amino-6-(D-ribitylamino)uracil contacts are provided by residues Phe21, Ala55–Glu57, and Thr79–Ile81. Ala84 to Thr85 is a (2S)-2-hydroxy-3-oxobutyl phosphate binding site. His87 acts as the Proton donor in catalysis. Phe112 is a binding site for 5-amino-6-(D-ribitylamino)uracil. Arg126 provides a ligand contact to (2S)-2-hydroxy-3-oxobutyl phosphate.

Belongs to the DMRL synthase family. As to quaternary structure, forms an icosahedral capsid composed of 60 subunits, arranged as a dodecamer of pentamers.

The catalysed reaction is (2S)-2-hydroxy-3-oxobutyl phosphate + 5-amino-6-(D-ribitylamino)uracil = 6,7-dimethyl-8-(1-D-ribityl)lumazine + phosphate + 2 H2O + H(+). It functions in the pathway cofactor biosynthesis; riboflavin biosynthesis; riboflavin from 2-hydroxy-3-oxobutyl phosphate and 5-amino-6-(D-ribitylamino)uracil: step 1/2. Its function is as follows. Catalyzes the formation of 6,7-dimethyl-8-ribityllumazine by condensation of 5-amino-6-(D-ribitylamino)uracil with 3,4-dihydroxy-2-butanone 4-phosphate. This is the penultimate step in the biosynthesis of riboflavin. The protein is 6,7-dimethyl-8-ribityllumazine synthase of Bacillus anthracis (strain A0248).